The primary structure comprises 481 residues: Endonuclease Bax1 (481 aa).

The N-terminal domain (NTD) stretch occupies residues 1–136 (MLPWELARFS…EKKIIKAPTI (136 aa)). Residues 158–250 (YKLTVYVSSN…LKLANFKELK (93 aa)) form a central domain (CRD) region. The nuclease domain (NUS) stretch occupies residues 260–364 (DSSVEEKFYK…YKRKIDISLV (105 aa)). 3 residues coordinate a divalent metal cation: Glu-265, Asp-297, and Glu-310. The segment at 414–481 (PGYIFLKNYY…AIVIKDKKVN (68 aa)) is C-terminal domain (CTD).

This sequence belongs to the Bax1 family. Homodimer in solution, forms a heterodimer with XPB2. Requires a divalent metal cation as cofactor.

Functionally, a dual DNA endonuclease probably involved in nucleotide excision repair (NER). The N-terminal nuclease domain (NTD) of the XPB2-Bax1 complex cleaves on one side of a DNA bubble (which presumably mimics DNA damage), while the NUS nuclease domain cleaves the other side, respectively called 5' and 3' nuclease activities. Interaction with XPB blocks the NTD nuclease activity. Binds to and stimulates the ATPase activity (and probably also helicase activity) of XPB2. Increases affinity of XPB2 for forked DNA. Does not stimulate the DNA-dependent activity of XPB1. In an XPB2-Bax1-bubble DNA crystal (12 bp of dsDNA, a 6 base bubble and 6 bp of dsDNA) the short 6 bp arm is unwound. The 2 helicase and the ThM domains of XPB2 with the NTD and CRD domains of Bax1 encircle the DNA, forming a tunnel where the 12 bp dsDNA and the ds-ssDNA junction are located. The ThM domain is wedged between the ssDNA tails, with the 5' ssDNA contacting Bax1 and the 3' ssDNA in a channel in XPB2. The nuclease domain (NUS) of Bax1 does not contact DNA in the bubble DNA complex. The protein is Endonuclease Bax1 of Sulfurisphaera tokodaii (strain DSM 16993 / JCM 10545 / NBRC 100140 / 7) (Sulfolobus tokodaii).